A 333-amino-acid chain; its full sequence is tRNA uridine(34) hydroxylase (333 aa).

The Rhodanese domain occupies 123-217 (SDPEVILVDT…YLEEIKQEES (95 aa)). The active-site Cysteine persulfide intermediate is Cys-177.

Belongs to the TrhO family.

The catalysed reaction is uridine(34) in tRNA + AH2 + O2 = 5-hydroxyuridine(34) in tRNA + A + H2O. Functionally, catalyzes oxygen-dependent 5-hydroxyuridine (ho5U) modification at position 34 in tRNAs. This chain is tRNA uridine(34) hydroxylase, found in Shewanella sp. (strain MR-7).